The primary structure comprises 131 residues: Small ribosomal subunit protein uS8 (131 aa).

This sequence belongs to the universal ribosomal protein uS8 family. In terms of assembly, part of the 30S ribosomal subunit. Contacts proteins S5 and S12.

In terms of biological role, one of the primary rRNA binding proteins, it binds directly to 16S rRNA central domain where it helps coordinate assembly of the platform of the 30S subunit. This Bacteroides thetaiotaomicron (strain ATCC 29148 / DSM 2079 / JCM 5827 / CCUG 10774 / NCTC 10582 / VPI-5482 / E50) protein is Small ribosomal subunit protein uS8.